Consider the following 67-residue polypeptide: ATP synthase F(0) complex subunit 8 (67 aa).

A helical membrane pass occupies residues 8–24 (TWFITITSMIMTLFILF). K54 is subject to N6-acetyllysine; alternate. At K54 the chain carries N6-succinyllysine; alternate. K57 carries the N6-acetyllysine modification.

This sequence belongs to the ATPase protein 8 family. As to quaternary structure, component of the ATP synthase complex composed at least of ATP5F1A/subunit alpha, ATP5F1B/subunit beta, ATP5MC1/subunit c (homooctomer), MT-ATP6/subunit a, MT-ATP8/subunit 8, ATP5ME/subunit e, ATP5MF/subunit f, ATP5MG/subunit g, ATP5MK/subunit k, ATP5MJ/subunit j, ATP5F1C/subunit gamma, ATP5F1D/subunit delta, ATP5F1E/subunit epsilon, ATP5PF/subunit F6, ATP5PB/subunit b, ATP5PD/subunit d, ATP5PO/subunit OSCP. ATP synthase complex consists of a soluble F(1) head domain (subunits alpha(3) and beta(3)) - the catalytic core - and a membrane F(0) domain - the membrane proton channel (subunits c, a, 8, e, f, g, k and j). These two domains are linked by a central stalk (subunits gamma, delta, and epsilon) rotating inside the F1 region and a stationary peripheral stalk (subunits F6, b, d, and OSCP). Interacts with PRICKLE3.

Its subcellular location is the mitochondrion membrane. Its function is as follows. Subunit 8, of the mitochondrial membrane ATP synthase complex (F(1)F(0) ATP synthase or Complex V) that produces ATP from ADP in the presence of a proton gradient across the membrane which is generated by electron transport complexes of the respiratory chain. ATP synthase complex consist of a soluble F(1) head domain - the catalytic core - and a membrane F(1) domain - the membrane proton channel. These two domains are linked by a central stalk rotating inside the F(1) region and a stationary peripheral stalk. During catalysis, ATP synthesis in the catalytic domain of F(1) is coupled via a rotary mechanism of the central stalk subunits to proton translocation. In vivo, can only synthesize ATP although its ATP hydrolase activity can be activated artificially in vitro. Part of the complex F(0) domain. In Sus scrofa (Pig), this protein is ATP synthase F(0) complex subunit 8.